Reading from the N-terminus, the 149-residue chain is Protegrin-3 (149 aa).

The first 29 residues, 1-29, serve as a signal peptide directing secretion; sequence METQRASLCLGRWSLWLLLLALVVPSASA. Positions 30 to 130 are excised as a propeptide; sequence QALSYREAVL…DITCNEVQGV (101 aa). The disordered stretch occupies residues 61–80; that stretch reads DQPPKADEDPGTPKPVSFTV. 4 disulfides stabilise this stretch: cysteine 85-cysteine 96, cysteine 107-cysteine 124, cysteine 136-cysteine 145, and cysteine 138-cysteine 143. Arginine 148 is modified (arginine amide).

It belongs to the cathelicidin family.

It localises to the secreted. Microbicidal activity. Active against E.coli, Listeria monocytogenes and C.albicans, in vitro. This chain is Protegrin-3 (NPG3), found in Sus scrofa (Pig).